A 179-amino-acid polypeptide reads, in one-letter code: Bacterioferritin (179 aa).

One can recognise a Ferritin-like diiron domain in the interval 1–150; the sequence is MAGNREDRKA…NIGSHIKNLG (150 aa). The Fe cation site is built by glutamate 23 and glutamate 56. Methionine 57 is a Fe-coproporphyrin III binding site. Histidine 59, glutamate 99, glutamate 132, and histidine 135 together coordinate Fe cation.

This sequence belongs to the bacterioferritin family. In terms of assembly, homooligomer of 24 subunits, arranged as 12 dimers, that are packed together to form an approximately spherical molecule with a central cavity, in which large amounts of iron can be deposited. The cofactor is Fe-coproporphyrin III. It depends on Fe cation as a cofactor.

The catalysed reaction is 4 Fe(2+) + O2 + 4 H(+) = 4 Fe(3+) + 2 H2O. The enzyme catalyses Fe(2+)(in) = Fe(2+)(out). In terms of biological role, iron-storage protein, whose ferroxidase center binds Fe(2+), oxidizes it using dioxygen to Fe(3+), and participates in the subsequent Fe(3+) oxide mineral core formation within the central cavity of the BFR protein shell. This Desulfovibrio desulfuricans (strain ATCC 27774 / DSM 6949 / MB) protein is Bacterioferritin (bfr).